A 1571-amino-acid chain; its full sequence is Neurexin-3 (1571 aa).

An N-terminal signal peptide occupies residues 1–27 (MSFTLHSVFFTLKVSIFLGSLVGLCLG). The Laminin G-like 1 domain maps to 28 to 202 (LEFMGLPNQW…SVQLEAEGPC (175 aa)). Residues 28 to 1496 (LEFMGLPNQW…EVIRESSSTT (1469 aa)) lie on the Extracellular side of the membrane. Residues N58 and N105 are each glycosylated (N-linked (GlcNAc...) asparagine). Positions 198 to 235 (AEGPCGERPCENGGICFLLDGHPTCDCSTTGYGGTLCS) constitute an EGF-like 1 domain. Intrachain disulfides connect C202–C213, C207–C222, and C224–C234. Laminin G-like domains are found at residues 258–440 (VATF…VFKC) and 447–639 (DPIN…KSSC). Ca(2+)-binding residues include D304, L321, and M374. 5 disulfide bridges follow: C404-C440, C610-C639, C647-C658, C652-C667, and C669-C679. The EGF-like 2 domain maps to 643–680 (SAKQCDSYPCKNNAVCKDGWNRFICDCTGTGYWGRTCE). 2 consecutive Laminin G-like domains span residues 685–857 (ILSY…IDYC) and 871–1046 (DPVT…ERGC). Ca(2+) is bound by residues D732 and L749. N-linked (GlcNAc...) asparagine glycosylation is present at N757. Position 807 (R807) interacts with Ca(2+). 4 cysteine pairs are disulfide-bonded: C1018-C1046, C1053-C1064, C1058-C1073, and C1075-C1085. Residues 1049–1086 (PSTTCQEDSCANQGVCMQQWEGFTCDCSMTSYSGNQCN) form the EGF-like 3 domain. The 201-residue stretch at 1090–1290 (ATYIFGKSGG…NPNIKINGSV (201 aa)) folds into the Laminin G-like 6 domain. Ca(2+) contacts are provided by D1142 and I1159. N-linked (GlcNAc...) asparagine glycosylation is present at N1189. Ca(2+) contacts are provided by I1241 and N1243. N-linked (GlcNAc...) asparagine glycosylation is found at N1287 and N1331. Residues 1324–1348 (ATTTTRKNRSTASIQPTSDDLVSSA) are disordered. Residues 1333–1348 (STASIQPTSDDLVSSA) show a composition bias toward polar residues. S1347 is a glycosylation site (O-linked (Xyl...) (heparan sulfate) serine). A helical transmembrane segment spans residues 1497-1517 (GMVVGIVAAAALCILILLYAM). Residues 1518–1571 (YKYRNRDEGSYQVDETRNYISNSAQSNGTLMKEKQASSKSGHKKQKNKDKEYYV) lie on the Cytoplasmic side of the membrane. The disordered stretch occupies residues 1539 to 1571 (NSAQSNGTLMKEKQASSKSGHKKQKNKDKEYYV).

The protein belongs to the neurexin family. In terms of assembly, the laminin G-like domain 2 binds to NXPH1. Specific isoforms bind to alpha-dystroglycan. The cytoplasmic C-terminal region binds to CASK. Specific isoforms bind neuroligins NLGN1, NLGN2 and NLGN3. Interacts with CLSTN3. O-glycosylated; contains heparan sulfate. Heparan sulfate attachment is required for synapse development by mediating interactions with neuroligins. As to expression, brain and arteries (at protein level).

It localises to the presynaptic cell membrane. Neuronal cell surface protein that may be involved in cell recognition and cell adhesion. May mediate intracellular signaling. The chain is Neurexin-3 (Nrxn3) from Mus musculus (Mouse).